We begin with the raw amino-acid sequence, 730 residues long: MTANSSRRRLQMKSPRTDGDEKEEDYGLPDFHTRFINDEDLEEFEKALNAPQALSLIAINDWRPIHRRVRKPGKLPKVPQRTKDETREGVVYTLLKWPFLLFVLSWIVFLGALYILTRLYISLYEHFFAWTGQRQRLRRALHSTVDYQHWKNAAKELDEYLGNDAWKERPQYAYYDNTTVMTVVSQLRQLRAQTEAGGINGKAAAEELCTLLEGCIKTNFAGIENPRLYSETYYGTKDLVQEFIEEAHTSLRLVLTSQQLSDERKQGLFRHLDTNFGRTVLCLSGGATLAYYHFGVIKALLDNDVLPDIISGTSGGALVAALVATRTDEELKKLLVPELAHKIKACQDGITTWAVRCWRTGARFDVMQWAEQCSWFCRGSTTFREAYERTGRVLNVSCVPSDPHSPTILANYLTSPNCVIWSAVLASAAVPGILNPVVLMMKKPDGTLAPYSFGHKWKDGSLRTDIPLKALDVHFNASFSIVSQVNPHISLFFFSSRGSVGRPVTHRKGRGWRGGFLGSALEQYIKLDLNKWLKVMRHLELLPRPLGQDWSEIWLQRFSGTVTIWPKSVLSDLYYILSDPSVQRLARMLHEGQQCTFPKIKFISNRMKIERVIAEGLMKDPEWAGSGRWNNVPFRSRTDQTLPLEENAQQRSASMLADTMSHLRDTGHFREAPTSHPTGSPVRPTSGRRNSLMEEIRRQSAVFFDDTDDTMPSDDEKFPYQGQSSGTKIG.

The segment covering 1–11 (MTANSSRRRLQ) has biased composition (basic residues). The interval 1–26 (MTANSSRRRLQMKSPRTDGDEKEEDY) is disordered. A helical transmembrane segment spans residues 97-117 (WPFLLFVLSWIVFLGALYILT). In terms of domain architecture, PNPLA spans 281–472 (LCLSGGATLA…RTDIPLKALD (192 aa)). The short motif at 312 to 316 (GTSGG) is the GXSXG element. Serine 314 acts as the Nucleophile in catalysis. Catalysis depends on aspartate 459, which acts as the Proton acceptor. The interval 667 to 730 (GHFREAPTSH…QGQSSGTKIG (64 aa)) is disordered. Over residues 721–730 (QGQSSGTKIG) the composition is skewed to polar residues.

It belongs to the PLPL family.

Its subcellular location is the membrane. Functionally, probable lipid hydrolase. This chain is Patatin-like phospholipase domain-containing protein CIMG_04897, found in Coccidioides immitis (strain RS) (Valley fever fungus).